The sequence spans 538 residues: MGLLLLVLILTPSLAAYRHPDFPLLEKAQQLLQSTGSPYSTNCWLCTSSSTETPGTAYPASPREWTSIEAELHISYRWDPNLKGLMRPANSLLSTVKQDFPDIRQKPPIFGPIFTNINLMGIAPICVMAKRKNGTNVGTLPSTVCNVTFTVDSNQQTYQTYTHNQFRHQPRFPKPPNITFPQGTLLDKSSRFCQGRPSSCSTRNFWFRPADYNQCLQISNLSSTAEWVLLDQTRNSLFWENKTKGANQSQTPCVQVLAGMTIATSYLGISAVSEFFGTSLTPLFHFHISTCLKTQGAFYICGQSIHQCLPSNWTGTCTIGYVTPDIFIAPGNLSLPIPIYGNSPLPRVRRAIHFIPLLAGLGILAGTGTGIAGITKASLTYSQLSKEIANNIDTMAKALTTMQEQIDSLAAVVLQNRRGLDMLTAAQGGICLALDEKCCFWVNQSGKVQDNIRQLLNQASSLRERATQGWLNWEGTWKWFSWVLPLTGPLVSLLLLLLFGPCLLNLITQFVSSRLQAIKLQTNLSAGRHPRNIQESPF.

An N-terminal signal peptide occupies residues 1-15; it reads MGLLLLVLILTPSLA. Residues 16-478 are Extracellular-facing; the sequence is AYRHPDFPLL…GWLNWEGTWK (463 aa). A CXXC motif is present at residues 43–46; the sequence is CWLC. 3 disulfides stabilise this stretch: Cys43–Cys46, Cys43–Cys439, and Cys431–Cys438. N-linked (GlcNAc...) asparagine glycans are attached at residues Asn133, Asn146, Asn177, Asn220, Asn241, Asn247, Asn312, and Asn332. The interval 354-374 is fusion peptide; that stretch reads FIPLLAGLGILAGTGTGIAGI. Residues 414 to 430 carry the CKS-17 motif; that stretch reads LQNRRGLDMLTAAQGGI. Positions 431–439 match the CX6CC motif; the sequence is CLALDEKCC. N-linked (GlcNAc...) asparagine glycosylation is present at Asn443. Residues 479-499 traverse the membrane as a helical segment; the sequence is WFSWVLPLTGPLVSLLLLLLF. The Cytoplasmic segment spans residues 500–538; that stretch reads GPCLLNLITQFVSSRLQAIKLQTNLSAGRHPRNIQESPF.

It belongs to the gamma type-C retroviral envelope protein family. HERV class-I FRD env subfamily. The surface and transmembrane proteins form a heterodimer. They are attached by non-covalent interactions or by a labile interchain disulfide bond. Interacts with MFSD2A. In terms of processing, specific enzymatic cleavages in vivo yield the mature SU and TM proteins. The CXXC motif is highly conserved across a broad range of retroviral envelope proteins. It is thought to participate in the formation of a labile disulfide bond possibly with the CX6CC motif present in the transmembrane protein. Isomerization of the intersubunit disulfide bond to an SU intrachain disulfide bond is thought to occur upon receptor recognition in order to allow membrane fusion. Expressed at higher level in placenta. Expressed at lower level in adrenal, bone marrow, brain, breast, colon, kidney, lung, ovary, peripheral blood lymphocytes, prostate, skin, spleen, testis, thymus, thyroid, trachea.

It localises to the virion. It is found in the cell membrane. Functionally, this endogenous retroviral envelope protein has retained its original fusogenic properties and participates in trophoblast fusion and the formation of a syncytium during placenta morphogenesis. The interaction with MFSD2A is apparently important for this process. Endogenous envelope proteins may have kept, lost or modified their original function during evolution but this one can still make pseudotypes with MLV, HIV-1 or SIV-1 virions and confer infectivity. Retroviral envelope proteins mediate receptor recognition and membrane fusion during early infection. The surface protein mediates receptor recognition, while the transmembrane protein anchors the envelope heterodimer to the viral membrane through one transmembrane domain. The other hydrophobic domain, called fusion peptide, mediates fusion of the viral membrane with the target cell membrane. This Homo sapiens (Human) protein is Syncytin-2 (ERVFRD-1).